Consider the following 463-residue polypeptide: A-type ATP synthase subunit B (463 aa).

This sequence belongs to the ATPase alpha/beta chains family. In terms of assembly, has multiple subunits with at least A(3), B(3), C, D, E, F, H, I and proteolipid K(x).

The protein localises to the cell membrane. Functionally, component of the A-type ATP synthase that produces ATP from ADP in the presence of a proton gradient across the membrane. The B chain is a regulatory subunit. The polypeptide is A-type ATP synthase subunit B (Desulfurococcus sp. (strain SY)).